A 64-amino-acid polypeptide reads, in one-letter code: Beta-insect depressant toxin BmKIT4 (64 aa).

One can recognise an LCN-type CS-alpha/beta domain in the interval 1–61; it reads DGYIRGSNGC…TWKSESNTCG (61 aa). Intrachain disulfides connect C10-C60, C14-C35, C21-C42, and C25-C44. C60 carries the cysteine amide modification.

Belongs to the long (4 C-C) scorpion toxin superfamily. Sodium channel inhibitor family. Beta subfamily. As to expression, expressed by the venom gland.

The protein localises to the secreted. Functionally, depressant insect beta-toxins cause a transient contraction paralysis followed by a slow flaccid paralysis. They bind voltage-independently at site-4 of sodium channels (Nav) and shift the voltage of activation toward more negative potentials thereby affecting sodium channel activation and promoting spontaneous and repetitive firing. This toxin is active only on insects. This Olivierus martensii (Manchurian scorpion) protein is Beta-insect depressant toxin BmKIT4.